A 200-amino-acid chain; its full sequence is 3-isopropylmalate dehydratase small subunit (200 aa).

Belongs to the LeuD family. LeuD type 1 subfamily. In terms of assembly, heterodimer of LeuC and LeuD.

It catalyses the reaction (2R,3S)-3-isopropylmalate = (2S)-2-isopropylmalate. It functions in the pathway amino-acid biosynthesis; L-leucine biosynthesis; L-leucine from 3-methyl-2-oxobutanoate: step 2/4. Functionally, catalyzes the isomerization between 2-isopropylmalate and 3-isopropylmalate, via the formation of 2-isopropylmaleate. The protein is 3-isopropylmalate dehydratase small subunit (leuD) of Synechocystis sp. (strain ATCC 27184 / PCC 6803 / Kazusa).